A 626-amino-acid chain; its full sequence is 5'-AMP-activated protein kinase catalytic subunit alpha-2 (626 aa).

The span at 1–24 (MFSHQDRDRDRKEDGGGDGTEMKS) shows a compositional bias: basic and acidic residues. Positions 1–77 (MFSHQDRDRD…GETSTKQQQE (77 aa)) are disordered. Residues 38 to 49 (NLSRKLSAKSRK) show a composition bias toward basic residues. A compositionally biased stretch (polar residues) spans 58-77 (DNSSKMSSPGGETSTKQQQE). A Protein kinase domain is found at 87–339 (YILKETLGVG…IKDVIAHEWF (253 aa)). ATP is bound by residues 93–101 (LGVGTFGKV) and K116. The active-site Proton acceptor is D210. Phosphothreonine; by par-4 is present on T243. Positions 541–568 (SGSASASSSRHASMSMPQKPAGIRGTRT) are disordered. Over residues 542–555 (GSASASSSRHASMS) the composition is skewed to low complexity.

This sequence belongs to the protein kinase superfamily. CAMK Ser/Thr protein kinase family. SNF1 subfamily. Tetramer, composed of 2 regulatory (R) and 2 catalytic (C) subunits. In the presence of cAMP it dissociates into 2 active monomeric C subunits and an R dimer that binds four cAMP molecules. Phosphorylated on Thr-243 in response to oxidative stress and during dauer development. Phosphorylation at Thr-243 is increased in response to sodium azide or the AMP analog AICAR (5-amino-1-(5-phospho-beta-D-ribosyl)imidazole-4-carboxamide). In terms of tissue distribution, expressed in the pharynx, the ventral cord, neurons including the hermaphrodite-specific neuron, body wall muscles, the vulva, the excretory canal, and weakly in the intestine.

The catalysed reaction is L-seryl-[protein] + ATP = O-phospho-L-seryl-[protein] + ADP + H(+). It catalyses the reaction L-threonyl-[protein] + ATP = O-phospho-L-threonyl-[protein] + ADP + H(+). Its activity is regulated as follows. Activated by phosphorylation. Acts as a sensor that couples lifespan to information about energy levels and insulin-like signals. Role in motility and response to oxidative stress. Involved in the establishment of germline stem cell (GSC) quiescence during dauer development. Plays a role in axon regrowth after axotomy in PLM neurons. Plays a role in the maintenance of glycogen stores which are necessary for resistance to hyperosmotic stress. Plays a role in the regulation of flp-7 secretion from ASI neurons. Keeps the CREB-regulated transcription coactivator 1 homolog crtc-1 inactive which in turn inhibits flp-7 secretion. Following serotonin signaling, derepresses crtc-1 which stimulates flp-7 secretion and subsequent body fat loss. The chain is 5'-AMP-activated protein kinase catalytic subunit alpha-2 from Caenorhabditis elegans.